The sequence spans 158 residues: Anaerobic nitrite reductase AHB2 (158 aa).

A Globin domain is found at 5–154 (GFTEKQEALV…LALAIKTEMK (150 aa)). The Homodimerization signature appears at 38–42 (EIAPA). Positions 48, 62, 66, and 101 each coordinate heme b. Positions 108–120 (DPHFEVVKEALLR) match the Homodimerization motif.

This sequence belongs to the plant globin family. Unable to dimerize. The cofactor is heme b. As to expression, expressed in rosette leaves but not in roots.

It is found in the cytoplasm. The protein resides in the nucleus. The catalysed reaction is Fe(III)-heme b-[protein] + nitric oxide + H2O = Fe(II)-heme b-[protein] + nitrite + 2 H(+). Functionally, phytoglobin that reduces nitrite to nitric oxide (NO) under anoxic conditions (e.g. during flooding or in waterlogged soil). May not function as an oxygen storage or transport protein. Has an unusually high affinity for O(2) through an hexacoordinate heme iron because of a very low dissociation constant. The polypeptide is Anaerobic nitrite reductase AHB2 (Arabidopsis thaliana (Mouse-ear cress)).